We begin with the raw amino-acid sequence, 170 residues long: uncharacterized protein (170 aa).

A run of 5 helical transmembrane segments spans residues 21-41, 55-75, 86-106, 117-137, and 143-163; these read NISL…AAVL, AYTS…TLLL, TGIA…YWLW, ISGV…VSLL, and FSAA…TLLP. The region spanning 35 to 161 is the EamA domain; that stretch reads IIFAAVLRWT…IMLATLGSTL (127 aa).

It belongs to the EamA transporter family.

It is found in the cell membrane. This is an uncharacterized protein from Haemophilus influenzae (strain ATCC 51907 / DSM 11121 / KW20 / Rd).